A 291-amino-acid polypeptide reads, in one-letter code: Co-chaperone protein DjlA (291 aa).

Topologically, residues 1–6 (MRYWGK) are periplasmic. The chain crosses the membrane as a helical span at residues 7-31 (LLGLALGIVSSTGIWGMIMGLLMGH). The Cytoplasmic segment spans residues 32 to 291 (WIDRARASRR…ELLKSANQTK (260 aa)). A disordered region spans residues 177–223 (ESPTGQQSRQNQSRQNGKSQQRRNNGYSNGHSYGGQRPPSPLRGPTV). Over residues 181 to 211 (GQQSRQNQSRQNGKSQQRRNNGYSNGHSYGG) the composition is skewed to low complexity. Residues 225–291 (SACRTLGVRS…ELLKSANQTK (67 aa)) enclose the J domain.

As to quaternary structure, homodimer.

Its subcellular location is the cell inner membrane. Functionally, regulatory DnaK co-chaperone. Direct interaction between DnaK and DjlA is needed for the induction of the wcaABCDE operon, involved in the synthesis of a colanic acid polysaccharide capsule, possibly through activation of the RcsB/RcsC phosphotransfer signaling pathway. The colanic acid capsule may help the bacterium survive conditions outside the host. This chain is Co-chaperone protein DjlA, found in Pectobacterium atrosepticum (strain SCRI 1043 / ATCC BAA-672) (Erwinia carotovora subsp. atroseptica).